The primary structure comprises 489 residues: N-succinylglutamate 5-semialdehyde dehydrogenase (489 aa).

Position 221-226 (221-226 (GSSGTG)) interacts with NAD(+). Residues Glu-244 and Cys-278 contribute to the active site.

Belongs to the aldehyde dehydrogenase family. AstD subfamily.

The enzyme catalyses N-succinyl-L-glutamate 5-semialdehyde + NAD(+) + H2O = N-succinyl-L-glutamate + NADH + 2 H(+). It functions in the pathway amino-acid degradation; L-arginine degradation via AST pathway; L-glutamate and succinate from L-arginine: step 4/5. Its function is as follows. Catalyzes the NAD-dependent reduction of succinylglutamate semialdehyde into succinylglutamate. In Sorangium cellulosum (strain So ce56) (Polyangium cellulosum (strain So ce56)), this protein is N-succinylglutamate 5-semialdehyde dehydrogenase.